The sequence spans 171 residues: AP-3 complex subunit sigma (171 aa).

The protein belongs to the adaptor complexes small subunit family. Adaptor protein complex 3 (AP-3) is a heterotetramer composed of two large adaptins (delta-type subunit and beta-type subunit), a medium adaptin (mu-type subunit) and a small adaptin (sigma-type subunit).

Its subcellular location is the endosome membrane. Its function is as follows. Part of the AP-3 complex, an adaptor-related complex which is essential for the compartmentalization of the endocytic pathway. The sequence is that of AP-3 complex subunit sigma (ap3s1) from Dictyostelium discoideum (Social amoeba).